Here is a 1696-residue protein sequence, read N- to C-terminus: PH domain leucine-rich repeat protein phosphatase 1 (1696 aa).

An N-acetylmethionine modification is found at Met1. Disordered regions lie at residues 1-97 (MEPA…GGGA) and 222-398 (LGHG…VVGE). Residues 79 to 92 (VPQPAAGGAAPVTA) show a composition bias toward low complexity. Over residues 313-325 (DTESFSLSPSAES) the composition is skewed to polar residues. The residue at position 378 (Ser378) is a Phosphoserine. In terms of domain architecture, PH spans 499-599 (RIQLSGMYNV…WLRQVSKVAS (101 aa)). LRR repeat units follow at residues 601–622 (RISSVDLSCCSLEHLPANLFYS), 624–645 (DLTHLNLKQNFLRQNPSLPAAR), 655–676 (KLKSLNLSNNHLGAFPSAVCSI), 678–699 (TLAELNVSCNALQEVPAAVGAM), 701–722 (NLQTFLLDGNFLQSLPAELENM), 724–746 (QLSYLGLSFNEFTDIPEVLEKLT), 836–857 (FLKALYASSNELVQLDVYPVPN), 858–879 (YLSYMDVSRNCLESVPEWVCES), 881–902 (KLEVLDIGHNQICELPARLFCN), 904–925 (SLRKLLAGHNRLARLPERLERT), 926–947 (SVEVLDVQHNQIIELPPNLLMK), 950–971 (SLRFLNASANKLETLPPATLSE), 976–996 (ILQELYLTNNSLTDKCVPLLT), 1000–1021 (RLKILHMAYNRLQSFPASKMAK), 1024–1045 (ELEEIDISGNKLKAIPTTIMNC), 1047–1068 (RMHTVIAHSNCIEVFPEVMQLP), 1069–1090 (EVKCVDLSCNELSEITLPENLP), and 1092–1113 (KLQELDLTGNPRLALDHKSLEL). In terms of domain architecture, PPM-type phosphatase spans 1138 to 1385 (SHGYTEASGV…DSISAVVVQL (248 aa)). Asp1173, Gly1174, Lys1337, and Asp1376 together coordinate Mn(2+). Disordered regions lie at residues 1422 to 1473 (RPSD…SPAY) and 1610 to 1696 (KPGG…DTPL). Composition is skewed to low complexity over residues 1431–1452 (SSSSGMASEISSELSTSEMSSE), 1647–1660 (QQQQQQQQQQQQQQ), and 1670–1680 (QAQAQAQAQAQ). Positions 1694-1696 (TPL) match the PDZ-binding motif.

Interacts with the nucleotide free form of K-Ras (KRAS) via its LRR repeats. Interacts with AKT2, AKT3 and PRKCB isoform beta-II. Interacts with WDR48 and USP12. The cofactor is Mn(2+). In terms of tissue distribution, mainly present in brain (at protein level). Isoform 2 is more abundant in adult brain neurons than isoform 1 in. Isoforms 1 and 2 are expressed in the retina but not found in rod outer segments.

The protein resides in the cytoplasm. Its subcellular location is the membrane. It is found in the cell membrane. It localises to the nucleus. The protein localises to the nucleoplasm. The protein resides in the nucleus membrane. The enzyme catalyses O-phospho-L-seryl-[protein] + H2O = L-seryl-[protein] + phosphate. It carries out the reaction O-phospho-L-threonyl-[protein] + H2O = L-threonyl-[protein] + phosphate. With respect to regulation, insensitive to okadaic acid. Deubiquitination by WDR48-USP12 complex positively regulates PHLPP1 stability. In terms of biological role, protein phosphatase involved in regulation of Akt and PKC signaling. Mediates dephosphorylation in the C-terminal domain hydrophobic motif of members of the AGC Ser/Thr protein kinase family; specifically acts on 'Ser-473' of AKT2 and AKT3, 'Ser-660' of PRKCB and 'Ser-657' of PRKCA. Isoform 2 seems to have a major role in regulating Akt signaling in hippocampal neurons while isoform 1 may promote Akt and PKC activation and inhibit ERK signaling. Akt regulates the balance between cell survival and apoptosis through a cascade that primarily alters the function of transcription factors that regulate pro- and antiapoptotic genes. Dephosphorylation of 'Ser-473' of Akt triggers apoptosis and suppression of tumor growth. Dephosphorylation of PRKCA and PRKCB leads to their destabilization and degradation. Dephosphorylates STK4 on 'Thr-387' leading to STK4 activation and apoptosis. Dephosphorylates RPS6KB1 and is involved in regulation of cap-dependent translation. Inhibits cancer cell proliferation and may act as a tumor suppressor. Dephosphorylates RAF1 inhibiting its kinase activity. May act as a negative regulator of K-Ras signaling in membrane rafts. Involved in the hippocampus-dependent long-term memory formation. Involved in circadian control by regulating the consolidation of circadian periodicity after resetting. Involved in development and function of regulatory T-cells. The polypeptide is PH domain leucine-rich repeat protein phosphatase 1 (Phlpp1) (Rattus norvegicus (Rat)).